We begin with the raw amino-acid sequence, 279 residues long: uncharacterized protein (279 aa).

3 consecutive transmembrane segments (helical) span residues 31 to 51 (GYIA…FHAT), 67 to 87 (LLSI…AKII), and 115 to 135 (EITG…SLAL).

This sequence belongs to the transketolase family. The cofactor is thiamine diphosphate.

The protein resides in the cell membrane. This is an uncharacterized protein from Sinorhizobium fredii (strain NBRC 101917 / NGR234).